A 65-amino-acid polypeptide reads, in one-letter code: Protein TrbD (65 aa).

This chain is Protein TrbD (trbD), found in Escherichia coli (strain K12).